The following is a 325-amino-acid chain: MGAMAPRTLLLLLAAALAPTQTQAGSHSMRYFETSVSRPGLGEPRFIIVGYVDDTQFVRFDSDAETPRMEPRAPWMEQEGPEYWERETQRAKGNEQSFHVSLRTLLGYYNQSESGSHTIQWMYGCKVGSDGRFLRGYLQYAYDGRDYIALNEDLKTWTAADVAAIITRRKWEQAGAAEYYRAYLEAECVEWLLRYLELGKETLLRTDPPKTHVTHHPGSEGDVTLRCWALGFYPADITLTWQLNGEELTQDMELVETRPAGDGTFQKWASVVVPLGKEQNYTCHVYHEGLPEPLTLRWEPPPSTDSIMSHIADLLWPSLKLWWYL.

A signal peptide spans M1–A24. Residues G25–S114 are alpha-1. The Extracellular portion of the chain corresponds to G25–H310. Residue N110 is glycosylated (N-linked (GlcNAc...) asparagine). Positions G115–T206 are alpha-2. 2 cysteine pairs are disulfide-bonded: C125/C188 and C227/C283. The interval D207–W298 is alpha-3. An Ig-like C1-type domain is found at P209–R297. N280 carries N-linked (GlcNAc...) asparagine glycosylation. A connecting peptide region spans residues E299 to H310. Residues I311 to Y324 traverse the membrane as a helical segment.

It belongs to the MHC class I family. As to quaternary structure, heterodimer of an alpha chain and a beta chain (beta-2-microglobulin).

The protein resides in the membrane. In terms of biological role, involved in the presentation of foreign antigens to the immune system. This Mus musculus (Mouse) protein is H-2 class I histocompatibility antigen, Q10 alpha chain (H2-Q10).